Consider the following 138-residue polypeptide: Large ribosomal subunit protein uL16 (138 aa).

It belongs to the universal ribosomal protein uL16 family. In terms of assembly, part of the 50S ribosomal subunit.

Binds 23S rRNA and is also seen to make contacts with the A and possibly P site tRNAs. The protein is Large ribosomal subunit protein uL16 of Corynebacterium kroppenstedtii (strain DSM 44385 / JCM 11950 / CIP 105744 / CCUG 35717).